A 134-amino-acid polypeptide reads, in one-letter code: Large ribosomal subunit protein bL20 (134 aa).

This sequence belongs to the bacterial ribosomal protein bL20 family.

Functionally, binds directly to 23S ribosomal RNA and is necessary for the in vitro assembly process of the 50S ribosomal subunit. It is not involved in the protein synthesizing functions of that subunit. This chain is Large ribosomal subunit protein bL20, found in Sinorhizobium medicae (strain WSM419) (Ensifer medicae).